The primary structure comprises 211 residues: Protein-L-isoaspartate O-methyltransferase (211 aa).

S60 is a catalytic residue.

Belongs to the methyltransferase superfamily. L-isoaspartyl/D-aspartyl protein methyltransferase family.

The protein resides in the cytoplasm. The enzyme catalyses [protein]-L-isoaspartate + S-adenosyl-L-methionine = [protein]-L-isoaspartate alpha-methyl ester + S-adenosyl-L-homocysteine. Functionally, catalyzes the methyl esterification of L-isoaspartyl residues in peptides and proteins that result from spontaneous decomposition of normal L-aspartyl and L-asparaginyl residues. It plays a role in the repair and/or degradation of damaged proteins. This is Protein-L-isoaspartate O-methyltransferase from Pseudomonas paraeruginosa (strain DSM 24068 / PA7) (Pseudomonas aeruginosa (strain PA7)).